The primary structure comprises 189 residues: Large ribosomal subunit protein bL9 (189 aa).

This sequence belongs to the bacterial ribosomal protein bL9 family.

Its function is as follows. Binds to the 23S rRNA. This Brucella canis (strain ATCC 23365 / NCTC 10854 / RM-666) protein is Large ribosomal subunit protein bL9.